A 72-amino-acid polypeptide reads, in one-letter code: Translation initiation factor IF-1 (72 aa).

Residues 1–72 form the S1-like domain; the sequence is MSKEDVIELE…TRGRIVWRSK (72 aa).

Belongs to the IF-1 family. As to quaternary structure, component of the 30S ribosomal translation pre-initiation complex which assembles on the 30S ribosome in the order IF-2 and IF-3, IF-1 and N-formylmethionyl-tRNA(fMet); mRNA recruitment can occur at any time during PIC assembly.

The protein resides in the cytoplasm. Functionally, one of the essential components for the initiation of protein synthesis. Stabilizes the binding of IF-2 and IF-3 on the 30S subunit to which N-formylmethionyl-tRNA(fMet) subsequently binds. Helps modulate mRNA selection, yielding the 30S pre-initiation complex (PIC). Upon addition of the 50S ribosomal subunit IF-1, IF-2 and IF-3 are released leaving the mature 70S translation initiation complex. The protein is Translation initiation factor IF-1 of Caldicellulosiruptor saccharolyticus (strain ATCC 43494 / DSM 8903 / Tp8T 6331).